Consider the following 340-residue polypeptide: MDESKRKALENALKAIEKEFGKGAVMRLGEMPKQQVDVIPTGSLALDLALGIGGIPRGRIVEIYGPESGGKTTLALTIIAQAQRRGGVAAFVDAEHALDPLYAQRLGVQVEDLLVSQPDTGEQALEIVELLARSGAVDVIVVDSVAALVPGAEIEGEMGDQHVGLQARLMSQALRKLTAVLAKSNTAAIFINQVREKVGVTYGNPETTPGGRALKFYASVRLDVRKSGQPIKVGNEAVGVKVRVKVVKNKLAPPFREAELEIYFGRGLDPVADLVNVAVAAGVIEKAGSWFSYGELRLGQGKEKAAEALRERPELLEEIRAKVLERSDQVVLAAGEDEGE.

Residue glycine 65–threonine 72 participates in ATP binding.

This sequence belongs to the RecA family.

It localises to the cytoplasm. Its function is as follows. Can catalyze the hydrolysis of ATP in the presence of single-stranded DNA, the ATP-dependent uptake of single-stranded DNA by duplex DNA, and the ATP-dependent hybridization of homologous single-stranded DNAs. It interacts with LexA causing its activation and leading to its autocatalytic cleavage. This is Protein RecA from Thermus thermophilus.